Here is a 649-residue protein sequence, read N- to C-terminus: Serine/threonine-protein kinase par-4 (649 aa).

Over residues 1 to 11 (MEGPSSSSVPT) the composition is skewed to polar residues. Residues 1-132 (MEGPSSSSVP…DEEAETPEEQ (132 aa)) form a disordered region. The segment covering 45-55 (NTEKMEKEKKP) has biased composition (basic and acidic residues). 2 stretches are compositionally biased toward acidic residues: residues 64-77 (PDYD…GSCE) and 117-129 (DDME…AETP). Residues 197–460 (YLWGGIIGTG…ISDVMQHPWF (264 aa)) form the Protein kinase domain. ATP is bound by residues 203 to 211 (IGTGSYGKV) and lysine 226. Aspartate 324 serves as the catalytic Proton acceptor. Positions 548 to 649 (TLEKRPGDGP…CIFRSRTDSS (102 aa)) are disordered. Over residues 597 to 609 (AVEVVEAVAAPEA) the composition is skewed to low complexity.

This sequence belongs to the protein kinase superfamily. CAMK Ser/Thr protein kinase family. LKB1 subfamily. Mg(2+) serves as cofactor. The cofactor is Mn(2+).

Its subcellular location is the cytoplasm. It is found in the cell cortex. It catalyses the reaction L-seryl-[protein] + ATP = O-phospho-L-seryl-[protein] + ADP + H(+). The enzyme catalyses L-threonyl-[protein] + ATP = O-phospho-L-threonyl-[protein] + ADP + H(+). Functionally, required for cytoplasmic partitioning and asymmetric cell division in early embryogenesis. Phosphorylates and restricts the asymmetry effectors mex-5 and mex-6 to the anterior cytoplasm of the zygote and maintains these phosphorylations until fertilization. Phosphorylates and regulates aak-2 in response to oxidative stress. May also play a role in motility, behavioral response, regulation of lifespan and dauer formation through this pathway. The protein is Serine/threonine-protein kinase par-4 of Caenorhabditis briggsae.